A 486-amino-acid polypeptide reads, in one-letter code: GDP-Man:Man(3)GlcNAc(2)-PP-Dol alpha-1,2-mannosyltransferase (486 aa).

The Lumenal portion of the chain corresponds to 1–16 (MAGPMCLCGMMRLLTA). Residues 17–37 (LFIPVLITSVGLCLIFVLLFI) traverse the membrane as a helical segment. The Cytoplasmic segment spans residues 38-229 (CTRLWVQRKK…SNNPVLSRLK (192 aa)). The helical intramembrane region spans 230 to 250 (LIYYYLFALFYGWVGSCSDVI). Over 251 to 393 (MVNSTWTFSH…IGLHTMWNEH (143 aa)) the chain is Cytoplasmic. An intramembrane region (helical) is located at residues 394-414 (FGIGIVECMAAGTIILAHNSG). Topologically, residues 415 to 486 (GPKLDIVVPH…FLASSEPLFK (72 aa)) are cytoplasmic.

It belongs to the glycosyltransferase group 1 family. Glycosyltransferase 4 subfamily.

The protein resides in the endoplasmic reticulum membrane. The catalysed reaction is an alpha-D-Man-(1-&gt;3)-[alpha-D-Man-(1-&gt;6)]-beta-D-Man-(1-&gt;4)-beta-D-GlcNAc-(1-&gt;4)-alpha-D-GlcNAc-diphospho-di-trans,poly-cis-dolichol + 2 GDP-alpha-D-mannose = an alpha-D-Man-(1-&gt;2)-alpha-D-Man-(1-&gt;2)-alpha-D-Man-(1-&gt;3)-[alpha-D-Man-(1-&gt;6)]-beta-D-Man-(1-&gt;4)-beta-D-GlcNAc-(1-&gt;4)-alpha-D-GlcNAc-diphospho-di-trans,poly-cis-dolichol + 2 GDP + 2 H(+). It participates in protein modification; protein glycosylation. Its function is as follows. GDP-Man:Man(3)GlcNAc(2)-PP-Dol alpha-1,2-mannosyltransferase that operates in the biosynthetic pathway of dolichol-linked oligosaccharides, the glycan precursors employed in protein asparagine (N)-glycosylation. The assembly of dolichol-linked oligosaccharides begins on the cytosolic side of the endoplasmic reticulum membrane and finishes in its lumen. The sequential addition of sugars to dolichol pyrophosphate produces dolichol-linked oligosaccharides containing fourteen sugars, including two GlcNAcs, nine mannoses and three glucoses. Once assembled, the oligosaccharide is transferred from the lipid to nascent proteins by oligosaccharyltransferases. Catalyzes, on the cytoplasmic face of the endoplasmic reticulum, the addition of the fourth and fifth mannose residues to the dolichol-linked oligosaccharide chain, to produce Man(5)GlcNAc(2)-PP-dolichol core oligosaccharide. Man(5)GlcNAc(2)-PP-dolichol is a substrate for ALG3, the following enzyme in the biosynthetic pathway. This chain is GDP-Man:Man(3)GlcNAc(2)-PP-Dol alpha-1,2-mannosyltransferase (alg11), found in Xenopus laevis (African clawed frog).